An 867-amino-acid chain; its full sequence is Alanine--tRNA ligase (867 aa).

The Zn(2+) site is built by His554, His558, Cys656, and His660.

The protein belongs to the class-II aminoacyl-tRNA synthetase family. It depends on Zn(2+) as a cofactor.

It is found in the cytoplasm. It carries out the reaction tRNA(Ala) + L-alanine + ATP = L-alanyl-tRNA(Ala) + AMP + diphosphate. Functionally, catalyzes the attachment of alanine to tRNA(Ala) in a two-step reaction: alanine is first activated by ATP to form Ala-AMP and then transferred to the acceptor end of tRNA(Ala). Also edits incorrectly charged Ser-tRNA(Ala) and Gly-tRNA(Ala) via its editing domain. This is Alanine--tRNA ligase from Methylococcus capsulatus (strain ATCC 33009 / NCIMB 11132 / Bath).